The sequence spans 120 residues: 5-hydroxyisourate hydrolase 2 (120 aa).

The substrate site is built by H10, R48, and Y117.

This sequence belongs to the transthyretin family. 5-hydroxyisourate hydrolase subfamily. In terms of assembly, homotetramer.

The enzyme catalyses 5-hydroxyisourate + H2O = 5-hydroxy-2-oxo-4-ureido-2,5-dihydro-1H-imidazole-5-carboxylate + H(+). Its function is as follows. Catalyzes the hydrolysis of 5-hydroxyisourate (HIU) to 2-oxo-4-hydroxy-4-carboxy-5-ureidoimidazoline (OHCU). This is 5-hydroxyisourate hydrolase 2 from Rhizobium meliloti (strain 1021) (Ensifer meliloti).